A 956-amino-acid chain; its full sequence is MAM domain-containing glycosylphosphatidylinositol anchor protein 1 (956 aa).

The N-terminal stretch at 1–18 is a signal peptide; the sequence is MEVTCLLLLALIPFHCRG. 2 Ig-like domains span residues 24-123 and 132-230; these read PAQA…KSIR and PVLT…KAIT. A glycan (N-linked (GlcNAc...) asparagine) is linked at Asn-42. Intrachain disulfides connect Cys-60/Cys-108 and Cys-157/Cys-214. 4 N-linked (GlcNAc...) asparagine glycosylation sites follow: Asn-235, Asn-247, Asn-257, and Asn-307. Ig-like domains are found at residues 240 to 323, 338 to 432, 440 to 532, and 539 to 650; these read PALK…KTVN, PDMI…IEVN, PTIS…AQVQ, and PEVE…PTRS. 2 disulfide bridges follow: Cys-262–Cys-308 and Cys-357–Cys-415. Asn-432 carries N-linked (GlcNAc...) asparagine glycosylation. Intrachain disulfides connect Cys-463-Cys-514 and Cys-560-Cys-616. Residues 627–744 form the Fibronectin type-III domain; sequence CLFQVSAKAY…SRIIHYTEPI (118 aa). Positions 752–919 constitute an MAM domain; that stretch reads NTCHFEDEKI…VTLKKGECPR (168 aa). Positions 780–789 are enriched in polar residues; it reads LTQNPKRSPN. A disordered region spans residues 780–799; the sequence is LTQNPKRSPNTGPPTDISGT. Ser-933 carries GPI-anchor amidated serine lipidation. Residues 934 to 956 constitute a propeptide, removed in mature form; the sequence is GAPRLSSLQLWGSMAIFLLALQR.

Interacts heterophilically through its MAM domain with proteins in axon-rich regions and through its Ig-like domains with proteins in differentiating muscle. Interacts (through the Ig-like domains) with NLGN2. As to expression, expressed by neurons in layers 2 and 3 of the cortex during their migration and settling in the cortical plate. Also found in layers 4 and 6a. From 9.5 dpc-13.5 dpc, detected in the marginal zone of the developing cortex. At 16.5 dpc, modest expression is found in the intermediate zone. At postnatal day 1, evident in the superficial cortical plate. By postnatal day 7, expression is limited to layers 2 and 3 throughout most of the cortex.

It is found in the cell membrane. Required for radial migration of cortical neurons in the superficial layer of the neocortex. Plays a role in the formation or maintenance of inhibitory synapses. May function by inhibiting the activity of NLGN2. The chain is MAM domain-containing glycosylphosphatidylinositol anchor protein 1 from Mus musculus (Mouse).